Consider the following 323-residue polypeptide: Sphingolipid delta(4)-desaturase DES1 (323 aa).

2 consecutive transmembrane segments (helical) span residues 41–61 (YNLIWVVMLMVAAQLTAFYLV) and 68–88 (WVVFWAYVFGSCISHSMTLAI). The Histidine box-1 motif lies at 89 to 93 (HEISH). Residues 102–122 (AMWNRWFGIFANLPLGLPYSI) form a helical membrane-spanning segment. A Histidine box-2 motif is present at residues 128 to 132 (HMDHH). 3 helical membrane-spanning segments follow: residues 159-179 (KFIWIVLQPFFYAIRPLCINP), 185-205 (LEIINLLAQLFFDIVIYYLWG), and 209-229 (IFYMLAGSVLGLGLHPISGHF). Residues 259-263 (HNEHH) carry the Histidine box-3 motif.

Belongs to the fatty acid desaturase type 1 family. DEGS subfamily. As to quaternary structure, interacts with RLBP1; the interaction increases synthesis of chromophore-precursors by DEGS1. As to expression, expressed in retina and retinal pigment epithelium by Mueller cells (at protein level).

Its subcellular location is the endoplasmic reticulum membrane. The enzyme catalyses an N-acylsphinganine + 2 Fe(II)-[cytochrome b5] + O2 + 2 H(+) = an N-acylsphing-4-enine + 2 Fe(III)-[cytochrome b5] + 2 H2O. It carries out the reaction all-trans-retinol = 11-cis-retinol. It catalyses the reaction all-trans-retinol = 9-cis-retinol. The catalysed reaction is all-trans-retinol = 13-cis-retinol. The enzyme catalyses 11-cis-retinol = 13-cis-retinol. It carries out the reaction 11-cis-retinol = 9-cis-retinol. Functionally, has sphingolipid-delta-4-desaturase activity. Converts D-erythro-sphinganine to D-erythro-sphingosine (E-sphing-4-enine). Catalyzes the equilibrium isomerization of retinols. The polypeptide is Sphingolipid delta(4)-desaturase DES1 (DEGS1) (Gallus gallus (Chicken)).